An 894-amino-acid chain; its full sequence is Alpha-actinin-2 (894 aa).

The segment at 1-254 is actin-binding; the sequence is MNQIEPGVQY…IMTYVSCFYH (254 aa). Calponin-homology (CH) domains are found at residues 38–142 and 151–257; these read KQQR…LRFA and TSAK…HAFA. Residue Thr237 is modified to Phosphothreonine. 4 Spectrin repeats span residues 281–391, 401–506, 516–627, and 637–740; these read RLME…WLLN, HLAE…ALER, QLHL…SLQE, and RLRR…EVET. EF-hand domains follow at residues 753 to 788 and 789 to 824; these read EQMN…MGYD and LGEA…ETAD. Positions 766, 770, 777, 802, 804, and 808 each coordinate Ca(2+).

This sequence belongs to the alpha-actinin family. As to quaternary structure, homodimer; antiparallel. Also forms heterodimers with ACTN3. Interacts with ADAM12, MYOZ1, MYOZ2 and MYOZ3. Interacts via its C-terminal region with the LDB3 PDZ domain. Interacts with XIRP2. Interacts with DST isoform 1 (via N-terminus). Interacts with PARVB. Interacts with SYNPO2. Ubiquitinated by FBXL22, leading to proteasomal degradation. Expressed in both skeletal and cardiac muscle.

It localises to the cytoplasm. It is found in the myofibril. The protein localises to the sarcomere. The protein resides in the z line. Functionally, F-actin cross-linking protein which is thought to anchor actin to a variety of intracellular structures. This is a bundling protein. The chain is Alpha-actinin-2 (ACTN2) from Homo sapiens (Human).